We begin with the raw amino-acid sequence, 42 residues long: Snaclec lebecetin subunit alpha (42 aa).

One can recognise a C-type lectin domain in the interval aspartate 1 to valine 42. A disulfide bridge connects residues cysteine 4 and cysteine 15.

In terms of assembly, heterodimer of subunits alpha and beta; disulfide-linked. Requires Ca(2+) as cofactor. Post-translationally, glycosylated. As to expression, expressed by the venom gland.

It localises to the secreted. In terms of biological role, binds to the platelet GPIb/IX/V receptor system and inhibits ristocetin-induced platelet aggregation in human platelet-rich plasma. Strongly inhibits platelet aggregation induced by ADP, calcium ionophore, thrombin and collagen. Does not inhibit U46619-induced platelet aggregation. In Macrovipera lebetinus (Levantine viper), this protein is Snaclec lebecetin subunit alpha.